We begin with the raw amino-acid sequence, 172 residues long: RNA silencing suppressor p19 (172 aa).

Over residues 1–15 (MERAIQGNDAREQAY) the composition is skewed to basic and acidic residues. The disordered stretch occupies residues 1–37 (MERAIQGNDAREQAYGERWNGGSGSSTSPFKLPDESP).

The protein belongs to the tombusvirus protein p19 family. As to quaternary structure, homodimer.

Viral suppressor of RNA silencing which binds specifically to silencing RNAs (siRNAs). Acts as a molecular caliper to specifically select siRNAs based on the length of the duplex region of the RNA. The polypeptide is RNA silencing suppressor p19 (Capsicum annuum (Capsicum pepper)).